The primary structure comprises 914 residues: Serine/threonine kinase SAD-1 (914 aa).

The 252-residue stretch at 47 to 298 (YKLEKTLGKG…LADVFKHPWV (252 aa)) folds into the Protein kinase domain. ATP-binding positions include 53 to 61 (LGKGQTGLV) and Lys76. Residue Asp169 is the Proton acceptor of the active site. Disordered regions lie at residues 375 to 551 (AQED…SPPS), 563 to 590 (TMNS…SGPW), and 757 to 914 (NSTQ…ADKV). The span at 393–402 (PPKKRTDSSR) shows a compositional bias: basic and acidic residues. A compositionally biased stretch (low complexity) spans 444–462 (RSSTRDLFGSSSSGSYSAR). Over residues 473–482 (ASRSTNSYHY) the composition is skewed to polar residues. Over residues 495–526 (AARHVRDAQERRESRDSGRGSSRKESKDRSDK) the composition is skewed to basic and acidic residues. Low complexity-rich tracts occupy residues 527-551 (SASS…SPPS) and 563-573 (TMNSTNSSTNS). Residues 574–590 (LIAGNSQTSIGSTSGPW) show a composition bias toward polar residues. Positions 780 to 796 (DSSVGSACSDSESNASS) are enriched in low complexity. Residues 823–837 (SMRSVGSGTANSYKS) show a composition bias toward polar residues. Positions 850–876 (ASSSSASNRYGPSSSSSGSYSNNADYS) are enriched in low complexity. Residues 882 to 903 (SQRSNGSSAPKNQYSPGSQRSF) are compositionally biased toward polar residues.

This sequence belongs to the protein kinase superfamily. CAMK Ser/Thr protein kinase family. SNF1 subfamily. As to quaternary structure, interacts with strd-1 and nab-1. Mg(2+) is required as a cofactor. Expressed in neurons. Colocalizes with strd-1 along the dorsal nerve cord.

The protein resides in the synapse. The enzyme catalyses L-seryl-[protein] + ATP = O-phospho-L-seryl-[protein] + ADP + H(+). It carries out the reaction L-threonyl-[protein] + ATP = O-phospho-L-threonyl-[protein] + ADP + H(+). In terms of biological role, regulates both neuronal polarity and synaptic organization when bound to strd-1. Kinase activity is required for the establishment, but not the maintenance, of both processes. Binding to nab-1 is essential for role in restricting axonal fate during neuronal polarization but is not required for regulating synapse morphology. The sequence is that of Serine/threonine kinase SAD-1 from Caenorhabditis elegans.